Consider the following 562-residue polypeptide: NAD-dependent malic enzyme (562 aa).

The active-site Proton donor is Y101. Position 154 (R154) interacts with NAD(+). The active-site Proton acceptor is K172. A divalent metal cation is bound by residues E243, D244, and D267. The NAD(+) site is built by D267 and N415.

The protein belongs to the malic enzymes family. In terms of assembly, homotetramer. Mg(2+) serves as cofactor. Requires Mn(2+) as cofactor.

The catalysed reaction is (S)-malate + NAD(+) = pyruvate + CO2 + NADH. It catalyses the reaction oxaloacetate + H(+) = pyruvate + CO2. In Aliivibrio fischeri (strain ATCC 700601 / ES114) (Vibrio fischeri), this protein is NAD-dependent malic enzyme.